Consider the following 74-residue polypeptide: Protein RALF-like 25 (74 aa).

Residues 1–22 form the signal peptide; sequence MKTFMIILLVICSILIVGRVEA. Disulfide bonds link C35/C44 and C62/C68.

Belongs to the plant rapid alkalinization factor (RALF) family.

It localises to the secreted. Its function is as follows. Cell signaling peptide that may regulate plant stress, growth, and development. Mediates a rapid alkalinization of extracellular space by mediating a transient increase in the cytoplasmic Ca(2+) concentration leading to a calcium-dependent signaling events through a cell surface receptor and a concomitant activation of some intracellular mitogen-activated protein kinases. In Arabidopsis thaliana (Mouse-ear cress), this protein is Protein RALF-like 25 (RALFL25).